The chain runs to 790 residues: Cadherin-20 (790 aa).

The first 25 residues, 1–25 (MSCKRSYHRHCALVYYMVLLDLTNA), serve as a signal peptide directing secretion. Positions 26 to 52 (VFEFSHPLIRDSGNSQSRQLLHHRLKR) are excised as a propeptide. The Extracellular portion of the chain corresponds to 26–612 (VFEFSHPLIR…PYTLPISLSR (587 aa)). Cadherin domains follow at residues 54 to 158 (WVWN…EPKF), 159 to 267 (LDGP…PPRF), 268 to 382 (PQKH…PPVF), 383 to 487 (GSSF…APTF), and 487 to 605 (FTKF…EPYT). N254, N283, N413, N454, and N535 each carry an N-linked (GlcNAc...) asparagine glycan. A helical membrane pass occupies residues 613–633 (GALIAILTCIFVLLVLVLLIL). Over 634-790 (SMRRHRKQPY…YGTKDNNGSL (157 aa)) the chain is Cytoplasmic.

As to expression, detected in embryonic posterior neural plate, embryonic neural tube, sulcus limitans and embryonic kidney.

Its subcellular location is the cell membrane. Cadherins are calcium-dependent cell adhesion proteins. They preferentially interact with themselves in a homophilic manner in connecting cells; cadherins may thus contribute to the sorting of heterogeneous cell types. In Xenopus laevis (African clawed frog), this protein is Cadherin-20 (cdh20).